The primary structure comprises 526 residues: Calcium-dependent protein kinase 28 (526 aa).

The disordered stretch occupies residues 1 to 37; that stretch reads MQPDPQPHGRGREKAAGAGPRLPPPVTAPSVGRPASV. A Protein kinase domain is found at 49 to 307; that stretch reads YRIGKKLGQG…AHEVLCHPWI (259 aa). ATP contacts are provided by residues 55-63 and lysine 78; that span reads LGQGQFGTT. The active-site Proton acceptor is the aspartate 173. The segment at 313–343 is autoinhibitory domain; sequence APDKPIDSAVLSRLKHFSAMNKLKKMALRVI. EF-hand domains follow at residues 350 to 385, 386 to 421, 422 to 457, and 460 to 491; these read EEIG…VGSD, LMEP…MNKL, EREE…FGLS, and HLED…GNAG. Ca(2+)-binding residues include aspartate 363, aspartate 365, serine 367, threonine 369, glutamate 374, aspartate 399, aspartate 401, serine 403, threonine 405, glutamate 410, aspartate 435, aspartate 437, serine 439, glutamate 446, aspartate 469, asparagine 471, aspartate 473, glutamine 475, and glutamate 480.

The protein belongs to the protein kinase superfamily. Ser/Thr protein kinase family. CDPK subfamily.

It catalyses the reaction L-seryl-[protein] + ATP = O-phospho-L-seryl-[protein] + ADP + H(+). It carries out the reaction L-threonyl-[protein] + ATP = O-phospho-L-threonyl-[protein] + ADP + H(+). Its activity is regulated as follows. Activated by calcium. Autophosphorylation may play an important role in the regulation of the kinase activity. May play a role in signal transduction pathways that involve calcium as a second messenger. This Oryza sativa subsp. japonica (Rice) protein is Calcium-dependent protein kinase 28.